We begin with the raw amino-acid sequence, 78 residues long: NAD(P)H-quinone oxidoreductase subunit O (78 aa).

Belongs to the complex I NdhO subunit family. NDH-1 can be composed of about 15 different subunits; different subcomplexes with different compositions have been identified which probably have different functions.

It is found in the cellular thylakoid membrane. It catalyses the reaction a plastoquinone + NADH + (n+1) H(+)(in) = a plastoquinol + NAD(+) + n H(+)(out). It carries out the reaction a plastoquinone + NADPH + (n+1) H(+)(in) = a plastoquinol + NADP(+) + n H(+)(out). NDH-1 shuttles electrons from an unknown electron donor, via FMN and iron-sulfur (Fe-S) centers, to quinones in the respiratory and/or the photosynthetic chain. The immediate electron acceptor for the enzyme in this species is believed to be plastoquinone. Couples the redox reaction to proton translocation, and thus conserves the redox energy in a proton gradient. Cyanobacterial NDH-1 also plays a role in inorganic carbon-concentration. The chain is NAD(P)H-quinone oxidoreductase subunit O from Prochlorococcus marinus (strain MIT 9215).